Here is a 95-residue protein sequence, read N- to C-terminus: Aspartyl/glutamyl-tRNA(Asn/Gln) amidotransferase subunit C (95 aa).

It belongs to the GatC family. As to quaternary structure, heterotrimer of A, B and C subunits.

The catalysed reaction is L-glutamyl-tRNA(Gln) + L-glutamine + ATP + H2O = L-glutaminyl-tRNA(Gln) + L-glutamate + ADP + phosphate + H(+). It catalyses the reaction L-aspartyl-tRNA(Asn) + L-glutamine + ATP + H2O = L-asparaginyl-tRNA(Asn) + L-glutamate + ADP + phosphate + 2 H(+). In terms of biological role, allows the formation of correctly charged Asn-tRNA(Asn) or Gln-tRNA(Gln) through the transamidation of misacylated Asp-tRNA(Asn) or Glu-tRNA(Gln) in organisms which lack either or both of asparaginyl-tRNA or glutaminyl-tRNA synthetases. The reaction takes place in the presence of glutamine and ATP through an activated phospho-Asp-tRNA(Asn) or phospho-Glu-tRNA(Gln). The chain is Aspartyl/glutamyl-tRNA(Asn/Gln) amidotransferase subunit C from Pelagibacter ubique (strain HTCC1062).